The primary structure comprises 602 residues: Zinc finger MYND domain-containing protein 11 (602 aa).

Positions 6 to 82 (KRRQADTKAI…CKGSKAGIEQ (77 aa)) constitute an SAMD1-like winged helix (WH) domain. Residues 100 to 148 (DWYCFECHLPGEVLICDLCFRVYHSKCLSDEFRLRDSSSPWQCPVCRSI) form a PHD-type zinc finger. The region spanning 149–255 (KKKNTNKQEM…KDTCHELDEL (107 aa)) is the Bromo domain. Zn(2+)-binding residues include Cys258, Cys261, Cys277, and His281. Residues 280–331 (NHELVWAKMKGFGFWPAKVMQKEDNQVDVRFFGHHHQRAWIPSENIQDITVN) enclose the PWWP domain. Lys366 is covalently cross-linked (Glycyl lysine isopeptide (Lys-Gly) (interchain with G-Cter in SUMO2)). The tract at residues 366–459 (KNEDRGEEEA…MLHRSTQTTN (94 aa)) is disordered. Positions 394–400 (RAKKGRR) match the Nuclear localization signal motif. Glycyl lysine isopeptide (Lys-Gly) (interchain with G-Cter in SUMO2) cross-links involve residues Lys407 and Lys408. At Ser421 the chain carries Phosphoserine. Positions 435 to 459 (SVSTQTKKLSASSPRMLHRSTQTTN) are enriched in polar residues. Residues 452–572 (HRSTQTTNDG…CYNCEEEAMY (121 aa)) form an interaction with human adenovirus E1A region. Positions 563, 566, 574, 575, 581, 585, 594, and 598 each coordinate Zn(2+). An MYND-type zinc finger spans residues 563 to 598 (CYNCEEEAMYHCCWNTSYCSIKCQQEHWHAEHKRTC).

In terms of assembly, homooligomer; forms homooligomers via its C-terminus. Interacts with histone H3.3 trimethylated at 'Lys-36' (H3.3K36me3). Interacts (via MYND-type zinc finger) with NCOR1. Interacts (via MYND-type zinc finger) with MGA protein (via PXLXP motif). Interacts (via MYND-type zinc finger) with EZH2. Interacts with EMSY and E2F6. Interacts with PIAS1 and UBE2I. As to quaternary structure, (Microbial infection) Interacts (via MYND-type zinc finger) with human adenovirus early E1A protein (via PXLXP motif); this interaction inhibits E1A mediated transactivation. (Microbial infection) Interacts (via MYND-type zinc finger) with Epstein-Barr virus EBNA2 protein (via PXLXP motif). Interacts with Epstein-Barr virus-derived protein LMP1; leading to negatively regulate NF-kappa-B activation by Epstein-Barr virus-derived protein LMP1. Post-translationally, sumoylated following its interaction with PIAS1 and UBE2I. In terms of processing, ubiquitinated, leading to proteasomal degradation. In terms of tissue distribution, ubiquitous.

It localises to the nucleus. The protein resides in the chromosome. Chromatin reader that specifically recognizes and binds histone H3.3 trimethylated at 'Lys-36' (H3.3K36me3) and regulates RNA polymerase II elongation. Does not bind other histone H3 subtypes (H3.1 or H3.2). Colocalizes with highly expressed genes and functions as a transcription corepressor by modulating RNA polymerase II at the elongation stage. Binds non-specifically to dsDNA. Acts as a tumor-suppressor by repressing a transcriptional program essential for tumor cell growth. Its function is as follows. (Microbial infection) Inhibits Epstein-Barr virus EBNA2-mediated transcriptional activation and host cell proliferation, through direct interaction. This chain is Zinc finger MYND domain-containing protein 11, found in Homo sapiens (Human).